Here is a 267-residue protein sequence, read N- to C-terminus: Ribosomal RNA small subunit methyltransferase A (267 aa).

S-adenosyl-L-methionine contacts are provided by Asn-18, Leu-20, Gly-45, Glu-66, Asp-91, and Asn-112.

The protein belongs to the class I-like SAM-binding methyltransferase superfamily. rRNA adenine N(6)-methyltransferase family. RsmA subfamily.

Its subcellular location is the cytoplasm. It carries out the reaction adenosine(1518)/adenosine(1519) in 16S rRNA + 4 S-adenosyl-L-methionine = N(6)-dimethyladenosine(1518)/N(6)-dimethyladenosine(1519) in 16S rRNA + 4 S-adenosyl-L-homocysteine + 4 H(+). Functionally, specifically dimethylates two adjacent adenosines (A1518 and A1519) in the loop of a conserved hairpin near the 3'-end of 16S rRNA in the 30S particle. May play a critical role in biogenesis of 30S subunits. The polypeptide is Ribosomal RNA small subunit methyltransferase A (Shewanella sediminis (strain HAW-EB3)).